Consider the following 235-residue polypeptide: Bypass of stop codon protein 2 (235 aa).

The chain crosses the membrane as a helical span at residues 68–88; that stretch reads FGIFQLMCSLGVIVLLLPIII. Phosphoserine is present on Ser-177.

Its subcellular location is the lipid droplet. The protein localises to the membrane. The chain is Bypass of stop codon protein 2 (BSC2) from Saccharomyces cerevisiae (strain ATCC 204508 / S288c) (Baker's yeast).